Here is a 223-residue protein sequence, read N- to C-terminus: DNA mismatch repair protein MutH (223 aa).

Belongs to the MutH family.

The protein resides in the cytoplasm. Its function is as follows. Sequence-specific endonuclease that cleaves unmethylated GATC sequences. It is involved in DNA mismatch repair. The chain is DNA mismatch repair protein MutH from Haemophilus influenzae (strain PittGG).